A 273-amino-acid chain; its full sequence is Imidazole glycerol phosphate synthase subunit HisF (273 aa).

Active-site residues include D11 and D134.

The protein belongs to the HisA/HisF family. As to quaternary structure, heterodimer of HisH and HisF.

The protein localises to the cytoplasm. The catalysed reaction is 5-[(5-phospho-1-deoxy-D-ribulos-1-ylimino)methylamino]-1-(5-phospho-beta-D-ribosyl)imidazole-4-carboxamide + L-glutamine = D-erythro-1-(imidazol-4-yl)glycerol 3-phosphate + 5-amino-1-(5-phospho-beta-D-ribosyl)imidazole-4-carboxamide + L-glutamate + H(+). The protein operates within amino-acid biosynthesis; L-histidine biosynthesis; L-histidine from 5-phospho-alpha-D-ribose 1-diphosphate: step 5/9. Functionally, IGPS catalyzes the conversion of PRFAR and glutamine to IGP, AICAR and glutamate. The HisF subunit catalyzes the cyclization activity that produces IGP and AICAR from PRFAR using the ammonia provided by the HisH subunit. The chain is Imidazole glycerol phosphate synthase subunit HisF from Methanosarcina mazei (strain ATCC BAA-159 / DSM 3647 / Goe1 / Go1 / JCM 11833 / OCM 88) (Methanosarcina frisia).